Reading from the N-terminus, the 309-residue chain is Serine/threonine-protein phosphatase 4 catalytic subunit (309 aa).

Mn(2+)-binding residues include Asp52, His54, Asp80, and Asn112. His113 functions as the Proton donor in the catalytic mechanism. Mn(2+) contacts are provided by His162 and His236. Leu309 carries the leucine methyl ester modification.

Belongs to the PPP phosphatase family. PP-4 (PP-X) subfamily. In terms of assembly, catalytic subunit of the histone H2A phosphatase complex (HTP-C) containing PPH3, PSY2 and PSY4. Mn(2+) is required as a cofactor.

It localises to the cytoplasm. The protein localises to the nucleus. The catalysed reaction is O-phospho-L-seryl-[protein] + H2O = L-seryl-[protein] + phosphate. It catalyses the reaction O-phospho-L-threonyl-[protein] + H2O = L-threonyl-[protein] + phosphate. Functionally, forms the histone H2A phosphatase complex in association with the regulatory subunits PSY2 and PSY4, which dephosphorylates H2AS128ph (gamma-H2A) that has been displaced from sites of DNA lesions in the double-stranded DNA break repair process. Dephosphorylation is necessary for efficient recovery from the DNA damage checkpoint. In Candida glabrata (strain ATCC 2001 / BCRC 20586 / JCM 3761 / NBRC 0622 / NRRL Y-65 / CBS 138) (Yeast), this protein is Serine/threonine-protein phosphatase 4 catalytic subunit (PPH3).